The chain runs to 333 residues: NAC domain-containing protein 26 (333 aa).

In terms of domain architecture, NAC spans 14-173 (LPPGFRFHPT…DWAVCRIFHK (160 aa)). The DNA-binding element occupies 114-179 (IGMKKTLVFY…IFHKSSGIKK (66 aa)). The segment at 143-162 (ADASPPQPPPPPSSAEPPRQ) is disordered. A compositionally biased stretch (pro residues) spans 147 to 157 (PPQPPPPPSSA).

As to quaternary structure, forms homodimers. Forms heterodimers with NAC20. Forms heterodimers with NAC23. Expressed in developing seeds.

Its subcellular location is the nucleus. In terms of biological role, transcription factor that acts redundantly with NAC20 to regulate the expression of genes involved in the biosynthesis of starch and storage proteins in grain. Directly binds to the promoters of starch synthase 1 (SS1), pullulanase (PUL), glutelin A1 (GLUA1), glutelins B4 and B5 (GLUB4 and GLUB5), alpha-globulin and 16 kDa prolamin, and activates their expression. Possesses transactivation activity in yeast. The protein is NAC domain-containing protein 26 of Oryza sativa subsp. indica (Rice).